We begin with the raw amino-acid sequence, 191 residues long: Small ribosomal subunit protein eS7z (191 aa).

An N-acetylmethionine modification is found at Met1. The stretch at 15–50 forms a coiled coil; it reads ELSELDEQVAQAFFDLENTNQELKSELKDLYVNSAV.

The protein belongs to the eukaryotic ribosomal protein eS7 family.

The sequence is that of Small ribosomal subunit protein eS7z (RPS7A) from Arabidopsis thaliana (Mouse-ear cress).